A 410-amino-acid chain; its full sequence is D-amino acid dehydrogenase (410 aa).

9–14 lines the FAD pocket; it reads GGGIVG.

Belongs to the DadA oxidoreductase family. The cofactor is FAD.

It is found in the cell inner membrane. It catalyses the reaction a D-alpha-amino acid + a quinone + H2O = a 2-oxocarboxylate + a quinol + NH4(+). In terms of biological role, catalyzes the oxidative deamination of D-amino acids. Has broad substrate specificity; is mostly active on D-proline, and to a lesser extent, on several other D-amino acids such as D-alanine, D-phenylalanine and D-serine. Mediates electron transport from D-proline to coenzyme Q1 in vitro, and is involved in the electron transport chain from D-proline to the c-type cytochrome in vivo. The chain is D-amino acid dehydrogenase from Helicobacter pylori (strain J99 / ATCC 700824) (Campylobacter pylori J99).